Reading from the N-terminus, the 514-residue chain is ATP synthase subunit alpha (514 aa).

170–177 contributes to the ATP binding site; the sequence is GDRQIGKT.

The protein belongs to the ATPase alpha/beta chains family. As to quaternary structure, F-type ATPases have 2 components, CF(1) - the catalytic core - and CF(0) - the membrane proton channel. CF(1) has five subunits: alpha(3), beta(3), gamma(1), delta(1), epsilon(1). CF(0) has three main subunits: a(1), b(2) and c(9-12). The alpha and beta chains form an alternating ring which encloses part of the gamma chain. CF(1) is attached to CF(0) by a central stalk formed by the gamma and epsilon chains, while a peripheral stalk is formed by the delta and b chains.

The protein localises to the cell inner membrane. The catalysed reaction is ATP + H2O + 4 H(+)(in) = ADP + phosphate + 5 H(+)(out). Produces ATP from ADP in the presence of a proton gradient across the membrane. The alpha chain is a regulatory subunit. The sequence is that of ATP synthase subunit alpha from Pseudomonas syringae pv. tomato (strain ATCC BAA-871 / DC3000).